The chain runs to 374 residues: MGLPRGSFFWLLLLLTAACSGLLFALYFSAVQRYPGPAAGARDTTSFEAFFQSKASNSWTGKGQACRHLLHLAIQRHPHFRGLFNLSIPVLLWGDLFTPALWDRLSQHKAPYGWRGLSHQVIASTLSLLNGSESAKLFAPPRDTPPKCIRCAVVGNGGILNGSRQGPNIDAHDYVFRLNGAVIKGFERDVGTKTSFYGFTVNTMKNSLVSYWNLGFTSVPQGQDLQYIFIPSDIRDYVMLRSAILGVPVPEGLDKGDRPHAYFGPEASASKFKLLHPDFISYLTERFLKSKLINTHFGDLYMPSTGALMLLTALHTCDQVSAYGFITSNYWKFSDHYFERKMKPLIFYANHDLSLEAALWRDLHKAGILQLYQR.

Residues 1-7 lie on the Cytoplasmic side of the membrane; it reads MGLPRGS. A helical; Signal-anchor for type II membrane protein membrane pass occupies residues 8–28; that stretch reads FFWLLLLLTAACSGLLFALYF. The Lumenal portion of the chain corresponds to 29–374; the sequence is SAVQRYPGPA…KAGILQLYQR (346 aa). 2 disulfides stabilise this stretch: cysteine 66/cysteine 148 and cysteine 151/cysteine 317. N-linked (GlcNAc...) asparagine glycans are attached at residues asparagine 85 and asparagine 130. Asparagine 156 serves as a coordination point for CMP-N-acetyl-beta-neuraminate. An N-linked (GlcNAc...) asparagine glycan is attached at asparagine 161. The CMP-N-acetyl-beta-neuraminate site is built by asparagine 179, serine 304, and histidine 336.

The protein belongs to the glycosyltransferase 29 family. As to expression, expressed in skeletal muscle, heart, kidney, placenta, lung and leukocytes.

The protein localises to the golgi apparatus membrane. It carries out the reaction a beta-D-galactosyl-(1-&gt;3)-N-acetyl-alpha-D-galactosaminyl derivative + CMP-N-acetyl-beta-neuraminate = a beta-D-galactosyl-(1-&gt;3)-[N-acetyl-alpha-neuraminyl-(2-&gt;6)]-N-acetyl-alpha-D-galactosaminyl derivative + CMP + H(+). It catalyses the reaction a 3-O-[N-acetyl-alpha-D-galactosaminyl]-L-threonyl-[protein] + CMP-N-acetyl-beta-neuraminate = a 3-O-[N-acetyl-alpha-neuraminosyl-(2-&gt;6)-N-acetyl-alpha-D-galactosaminyl]-L-threonyl-[protein] + CMP + H(+). The enzyme catalyses a 3-O-[N-acetyl-alpha-neuraminyl-(2-&gt;3)-beta-D-galactosyl-(1-&gt;3)-N-acetyl-alpha-D-galactosaminyl]-L-threonyl-[protein] + CMP-N-acetyl-beta-neuraminate = a 3-O-{alpha-Neu5Ac-(2-&gt;3)-beta-D-Gal-(1-&gt;3)-[alpha-Neu5Ac-(2-&gt;6)]-alpha-D-GalNAc}-L-threonyl-[protein] + CMP + H(+). It participates in protein modification; protein glycosylation. Catalyzes the transfer of N-acetylneuraminyl groups onto glycan chains in glycoproteins. Conjugates sialic acid with an alpha-2-6 linkage to N-acetylgalactosamine (GalNAc) glycan chains linked to serine or threonine in glycoproteins. Sialylates alphaGalNAc- and Galbeta1-&gt;3GalNAc-O-Ser/Thr epitopes also known as Tn and T antigens. The polypeptide is Alpha-N-acetylgalactosaminide alpha-2,6-sialyltransferase 2 (ST6GALNAC2) (Homo sapiens (Human)).